We begin with the raw amino-acid sequence, 657 residues long: Glycogen debranching enzyme (657 aa).

The Nucleophile role is filled by Asp-336. The active-site Proton donor is Glu-371. Residues 458 to 467 are compositionally biased toward basic and acidic residues; the sequence is NEANGEENRD. Positions 458–479 are disordered; it reads NEANGEENRDGTNNNYSNNHGK.

It belongs to the glycosyl hydrolase 13 family.

It catalyses the reaction Hydrolysis of (1-&gt;6)-alpha-D-glucosidic linkages to branches with degrees of polymerization of three or four glucose residues in limit dextrin.. The protein operates within glycan degradation; glycogen degradation. Functionally, removes maltotriose and maltotetraose chains that are attached by 1,6-alpha-linkage to the limit dextrin main chain, generating a debranched limit dextrin. The sequence is that of Glycogen debranching enzyme from Escherichia coli O139:H28 (strain E24377A / ETEC).